We begin with the raw amino-acid sequence, 416 residues long: S-adenosylmethionine synthase (416 aa).

His-14 provides a ligand contact to ATP. Asp-16 contacts Mg(2+). Glu-42 lines the K(+) pocket. The L-methionine site is built by Glu-55 and Gln-98. The tract at residues 98 to 108 is flexible loop; sequence QSADINQGVDR. ATP contacts are provided by residues 164–166, 240–241, Asp-249, 255–256, Ala-272, and Lys-276; these read DAK, KF, and RK. Asp-249 provides a ligand contact to L-methionine. Residue Lys-280 coordinates L-methionine.

It belongs to the AdoMet synthase family. As to quaternary structure, homotetramer; dimer of dimers. Mg(2+) is required as a cofactor. It depends on K(+) as a cofactor.

The protein localises to the cytoplasm. The enzyme catalyses L-methionine + ATP + H2O = S-adenosyl-L-methionine + phosphate + diphosphate. It participates in amino-acid biosynthesis; S-adenosyl-L-methionine biosynthesis; S-adenosyl-L-methionine from L-methionine: step 1/1. Its function is as follows. Catalyzes the formation of S-adenosylmethionine (AdoMet) from methionine and ATP. The overall synthetic reaction is composed of two sequential steps, AdoMet formation and the subsequent tripolyphosphate hydrolysis which occurs prior to release of AdoMet from the enzyme. The polypeptide is S-adenosylmethionine synthase (Flavobacterium johnsoniae (strain ATCC 17061 / DSM 2064 / JCM 8514 / BCRC 14874 / CCUG 350202 / NBRC 14942 / NCIMB 11054 / UW101) (Cytophaga johnsonae)).